The sequence spans 115 residues: Large ribosomal subunit protein bL20c (115 aa).

This sequence belongs to the bacterial ribosomal protein bL20 family.

The protein localises to the plastid. Its subcellular location is the chloroplast. Its function is as follows. Binds directly to 23S ribosomal RNA and is necessary for the in vitro assembly process of the 50S ribosomal subunit. It is not involved in the protein synthesizing functions of that subunit. The sequence is that of Large ribosomal subunit protein bL20c (rpl20) from Mesostigma viride (Green alga).